The chain runs to 89 residues: Putative septation protein SpoVG (89 aa).

The protein belongs to the SpoVG family.

Its function is as follows. Could be involved in septation. The sequence is that of Putative septation protein SpoVG from Heliobacterium modesticaldum (strain ATCC 51547 / Ice1).